A 262-amino-acid chain; its full sequence is Homeobox-leucine zipper protein HOX24 (262 aa).

Disordered regions lie at residues 44 to 68 (AAGR…RKRR) and 162 to 189 (LNER…NSVM). Positions 46–62 (GRGGGDGDGGGGGGGGG) are enriched in gly residues. Positions 61–122 (GGGERKRRFT…NKRARWRSKQ (62 aa)) form a DNA-binding region, homeobox. Residues 121-165 (KQIEHDYAALRAQYDALHARVESLRQEKLALAAQVDELRGKLNER) form a leucine-zipper region.

The protein belongs to the HD-ZIP homeobox family. Class I subfamily. As to expression, expressed in roots and panicles.

The protein resides in the nucleus. Its function is as follows. Probable transcription factor. The polypeptide is Homeobox-leucine zipper protein HOX24 (HOX24) (Oryza sativa subsp. indica (Rice)).